The following is an 82-amino-acid chain: Small ribosomal subunit protein bTHXm (82 aa).

A mitochondrion-targeting transit peptide spans methionine 1–valine 22. The interval arginine 34–arginine 56 is disordered. The segment covering lysine 37–lysine 46 has biased composition (basic residues).

The protein belongs to the bacterial ribosomal protein bTHX family.

It localises to the mitochondrion. The protein is Small ribosomal subunit protein bTHXm of Oryza sativa subsp. japonica (Rice).